The following is a 437-amino-acid chain: MSHELTLQELAEFSANFNADPKNQVIARAAARSGVLEASYNERVAGRLTRVFSTELPTDNVTNQKQSGRCWLFSTLNVLRHDFGAKHKAKNFTLSQSYNFFWDKLERANLFYEKVIETADKPLDDREVRSYFDFAGHDGGQWHMAISLVKKYGVVPSYVMPESFNTSATNGLASALADKERKDALALRRLAQAGDQEGLEKARKTFLNEIYRMVAIAVGEPPKTFDLEYRDDDKNYHLEKNLTPVSFFNKYFDVDLDDYVVLTNAPDHEYGKLYHLGAEDNVEGGSPILFLNVPMEYLEQTAVAQLKDGEAVWFGNDVLRQMDRKTGYLDTDLYKLEDLFDVDLSLSKADRLATGAGEVSHAMTLVGVDEDKGDIRQWKVENSWGDKSGEKGFFVMSHNWFKEYVYEVVVHKKYLTKDQQELLSSTPVELAPWDSLA.

Residues Cys70, His361, and Asn382 contribute to the active site.

This sequence belongs to the peptidase C1 family.

The protein resides in the cytoplasm. This Lactobacillus delbrueckii subsp. lactis protein is Aminopeptidase G (pepG).